A 152-amino-acid chain; its full sequence is uncharacterized protein (152 aa).

This is an uncharacterized protein from Homo sapiens (Human).